Consider the following 261-residue polypeptide: Calbindin (261 aa).

Position 2 is an N-acetylalanine (Ala-2). The segment at 2-7 (AESHLQ) is interaction with RANBP9. 5 EF-hand domains span residues 11 to 46 (ITAS…LQQA), 53 to 88 (ELSP…EENF), 98 to 133 (KSCE…LLEK), 142 to 177 (KLAE…QENF), and 186 to 221 (MCGK…LCEK). 5 residues coordinate Ca(2+): Asp-24, Asp-26, Ser-28, Tyr-30, and Glu-35. Residues Asp-111, Asp-113, Ser-115, Glu-122, Asp-155, Asn-157, Asp-159, Lys-161, Glu-166, Asp-199, Asp-201, Asn-203, Tyr-205, and Glu-210 each coordinate Ca(2+).

This sequence belongs to the calbindin family. As to quaternary structure, interacts with RANBP9.

Functionally, buffers cytosolic calcium. May stimulate a membrane Ca(2+)-ATPase and a 3',5'-cyclic nucleotide phosphodiesterase. This Homo sapiens (Human) protein is Calbindin (CALB1).